The sequence spans 175 residues: Enhancer of mRNA-decapping protein 1 (175 aa).

Residues 1–27 (MSTDTMYFNSSRLLPSAGRNKTNNLIK) show a composition bias toward polar residues. 2 disordered regions span residues 1-113 (MSTD…KDDT) and 155-175 (GSTFATNGPREAKNLPKPSFL). Residue Ser2 is modified to N-acetylserine. The span at 35–47 (ARGNAAKNANNNN) shows a compositional bias: low complexity. The segment covering 58–77 (LPNGQKPNFGHSSNKKPSFN) has biased composition (polar residues). Ser82 carries the phosphoserine modification. Positions 100-113 (NNKETPRQNNKDDT) are enriched in basic and acidic residues.

Belongs to the EDC family.

The protein resides in the cytoplasm. MRNA-binding protein which stimulates mRNA decapping by DCP1 and DCP2. Involved in the regulation of expression of multiple genes involved in glycolysis and gluconeogenesis. This is Enhancer of mRNA-decapping protein 1 (EDC1) from Saccharomyces cerevisiae (strain ATCC 204508 / S288c) (Baker's yeast).